A 157-amino-acid chain; its full sequence is Small ribosomal subunit protein uS7 (157 aa).

It belongs to the universal ribosomal protein uS7 family. Part of the 30S ribosomal subunit. Contacts proteins S9 and S11.

One of the primary rRNA binding proteins, it binds directly to 16S rRNA where it nucleates assembly of the head domain of the 30S subunit. Is located at the subunit interface close to the decoding center, probably blocks exit of the E-site tRNA. The polypeptide is Small ribosomal subunit protein uS7 (Akkermansia muciniphila (strain ATCC BAA-835 / DSM 22959 / JCM 33894 / BCRC 81048 / CCUG 64013 / CIP 107961 / Muc)).